The following is a 242-amino-acid chain: Ribosomal RNA small subunit methyltransferase G (242 aa).

Residues G79, F84, 130 to 131 (AE), and R150 each bind S-adenosyl-L-methionine.

It belongs to the methyltransferase superfamily. RNA methyltransferase RsmG family.

It is found in the cytoplasm. In terms of biological role, specifically methylates the N7 position of a guanine in 16S rRNA. This chain is Ribosomal RNA small subunit methyltransferase G, found in Levilactobacillus brevis (strain ATCC 367 / BCRC 12310 / CIP 105137 / JCM 1170 / LMG 11437 / NCIMB 947 / NCTC 947) (Lactobacillus brevis).